The following is a 595-amino-acid chain: Aspartate--tRNA(Asp/Asn) ligase (595 aa).

Residue Glu178 participates in L-aspartate binding. Residues 202–205 are aspartate; sequence QIFK. Arg224 contributes to the L-aspartate binding site. ATP is bound by residues 224–226 and Gln233; that span reads RDE. Position 458 (His458) interacts with L-aspartate. Glu488 is an ATP binding site. Arg495 contacts L-aspartate. 540–543 is an ATP binding site; sequence GIDR.

The protein belongs to the class-II aminoacyl-tRNA synthetase family. Type 1 subfamily. In terms of assembly, homodimer.

Its subcellular location is the cytoplasm. The enzyme catalyses tRNA(Asx) + L-aspartate + ATP = L-aspartyl-tRNA(Asx) + AMP + diphosphate. Aspartyl-tRNA synthetase with relaxed tRNA specificity since it is able to aspartylate not only its cognate tRNA(Asp) but also tRNA(Asn). Reaction proceeds in two steps: L-aspartate is first activated by ATP to form Asp-AMP and then transferred to the acceptor end of tRNA(Asp/Asn). In Acaryochloris marina (strain MBIC 11017), this protein is Aspartate--tRNA(Asp/Asn) ligase.